Consider the following 239-residue polypeptide: Ribosomal RNA small subunit methyltransferase G (239 aa).

S-adenosyl-L-methionine-binding positions include glycine 78, phenylalanine 83, 129-130 (AE), and arginine 148.

This sequence belongs to the methyltransferase superfamily. RNA methyltransferase RsmG family.

The protein resides in the cytoplasm. Its function is as follows. Specifically methylates the N7 position of a guanine in 16S rRNA. The sequence is that of Ribosomal RNA small subunit methyltransferase G from Clostridium tetani (strain Massachusetts / E88).